We begin with the raw amino-acid sequence, 210 residues long: SAP domain-containing ribonucleoprotein (210 aa).

Ala2 is modified (N-acetylalanine). The SAP domain maps to 8 to 42; sequence LHKLKLAELKQECLARGLETKGIKQDLIHRLQAYL. At Lys10 the chain carries N6-acetyllysine. The segment covering 45-64 has biased composition (acidic residues); the sequence is HAEEEANEEDVLGDETEEEE. Positions 45-86 are disordered; it reads HAEEEANEEDVLGDETEEEETKPIELPVKEEEPPEKTVDVAA. Residues 65–86 show a composition bias toward basic and acidic residues; the sequence is TKPIELPVKEEEPPEKTVDVAA. N6-acetyllysine is present on Lys142. Residues 161-210 are disordered; sequence VSSISRKSEDDEKLKKRKERFGIVTSSAGTGTTEDTEAKKRKRAERFGIA. Phosphoserine is present on Ser163. The segment covering 184–193 has biased composition (polar residues); sequence VTSSAGTGTT.

The protein belongs to the SAP domain-containing ribonucleoprotein family. Interacts with DDX39A. Interacts with FUS. Interacts (via the C-terminal domain) with DDX39B; the interaction is direct and facilitates RNA binding of DDX39B. Component of the transcription/export (TREX) complex at least composed of ALYREF/THOC4, DDX39B, SARNP/CIP29, CHTOP and the THO subcomplex; TREX seems to have dynamic structure involving ATP-dependent remodeling; in the complex interacts directly with DDX39B in a ATP-dependent manner which bridges it to ALYREF/THOC4. Low expression in spleen, liver, pancreas, testis, thymus, heart, and kidney. Increased levels are seen in hepatocellular carcinoma and pancreatic adenocarcinoma.

It is found in the nucleus. Its subcellular location is the nucleus speckle. In terms of biological role, binds both single-stranded and double-stranded DNA with higher affinity for the single-stranded form. Specifically binds to scaffold/matrix attachment region DNA. Also binds single-stranded RNA. Enhances RNA unwinding activity of DDX39A. May participate in important transcriptional or translational control of cell growth, metabolism and carcinogenesis. Component of the TREX complex which is thought to couple mRNA transcription, processing and nuclear export, and specifically associates with spliced mRNA and not with unspliced pre-mRNA. The TREX complex is recruited to spliced mRNAs by a transcription-independent mechanism, binds to mRNA upstream of the exon-junction complex (EJC) and is recruited in a splicing- and cap-dependent manner to a region near the 5' end of the mRNA where it functions in mRNA export to the cytoplasm via the TAP/NXF1 pathway. Associates with DDX39B, which facilitates RNA binding of DDX39B and likely plays a role in mRNA export. The protein is SAP domain-containing ribonucleoprotein (SARNP) of Homo sapiens (Human).